The sequence spans 275 residues: NH(3)-dependent NAD(+) synthetase (275 aa).

Residue 46-53 (GISGGQDS) coordinates ATP. Residue Asp-52 participates in Mg(2+) binding. Position 140 (Arg-140) interacts with deamido-NAD(+). Thr-160 is an ATP binding site. Position 165 (Glu-165) interacts with Mg(2+). Residues Lys-173 and Asp-180 each contribute to the deamido-NAD(+) site. ATP-binding residues include Lys-189 and Thr-211. 260-261 (HK) is a deamido-NAD(+) binding site.

This sequence belongs to the NAD synthetase family. As to quaternary structure, homodimer.

It carries out the reaction deamido-NAD(+) + NH4(+) + ATP = AMP + diphosphate + NAD(+) + H(+). Its pathway is cofactor biosynthesis; NAD(+) biosynthesis; NAD(+) from deamido-NAD(+) (ammonia route): step 1/1. Functionally, catalyzes the ATP-dependent amidation of deamido-NAD to form NAD. Uses ammonia as a nitrogen source. The sequence is that of NH(3)-dependent NAD(+) synthetase from Salmonella enteritidis PT4 (strain P125109).